The sequence spans 505 residues: Serine/threonine protein kinase OSK1 (505 aa).

The Protein kinase domain occupies 14–266; sequence YRIGKTLGIG…IREIREHQWF (253 aa). Residues 20–28 and lysine 43 contribute to the ATP site; that span reads LGIGSFGKV. Aspartate 137 serves as the catalytic Proton acceptor. In terms of domain architecture, UBA spans 287 to 327; sequence KLDDETLNDVINMGFDKNQLIESLHKRLQNEATVAYYLLLD. Polar residues predominate over residues 347 to 361; it reads SSLAQVTPAETPNSA. Residues 347–372 form a disordered region; it reads SSLAQVTPAETPNSATDHRQHGHMES. The region spanning 456–504 is the KA1 domain; sequence SEKSTHTVKFEIQLYKTRDEKYLLDLQRVSGPQLLFLDLCSAFLTQLRV.

The protein belongs to the protein kinase superfamily. Ser/Thr protein kinase family. Expressed in young roots, young shoots, flowers, and immature seeds. Mostly expressed in leaf sheaths and roots, and to a lower extent, in germinating seeds, leaf blades and panicles.

It localises to the nucleus. The catalysed reaction is L-seryl-[protein] + ATP = O-phospho-L-seryl-[protein] + ADP + H(+). The enzyme catalyses L-threonyl-[protein] + ATP = O-phospho-L-threonyl-[protein] + ADP + H(+). Functionally, serine/threonine-protein kinase involved in sugar signaling during germination and seedling growth. Negative regulators of sugar response complex (SRC) in alpha-amylase gene promoters, thus relieving SRC sugar repression in a MYBS1-dependent manner. Required for MYBS1 and AAMY3 accumulation under glucose starvation. This chain is Serine/threonine protein kinase OSK1, found in Oryza sativa subsp. japonica (Rice).